A 528-amino-acid polypeptide reads, in one-letter code: Beta-galactoside alpha-2,6-sialyltransferase 2 (528 aa).

The Cytoplasmic portion of the chain corresponds to 1–10 (MKPNLKQWKQ). Residues 11–31 (LMLFGIFAWGLLFLVIFIYFT) form a helical; Signal-anchor for type II membrane protein membrane-spanning segment. Residues 32–528 (DSNSAEPVPS…CPERNNFPPL (497 aa)) are Lumenal-facing. Asparagine 167, asparagine 308, and asparagine 338 each carry an N-linked (GlcNAc...) asparagine glycan. Disulfide bonds link cysteine 254–cysteine 519, cysteine 297–cysteine 448, and cysteine 466–cysteine 477.

Belongs to the glycosyltransferase 29 family.

The protein resides in the golgi apparatus. It is found in the golgi stack membrane. The enzyme catalyses a beta-D-galactoside + CMP-N-acetyl-beta-neuraminate = an N-acetyl-alpha-neuraminyl-(2-&gt;6)-beta-D-galactosyl derivative + CMP + H(+). Its function is as follows. Transfers sialic acid from the donor of substrate CMP-sialic acid to galactose containing acceptor substrates. The chain is Beta-galactoside alpha-2,6-sialyltransferase 2 (ST6GAL2) from Gallus gallus (Chicken).